A 461-amino-acid chain; its full sequence is Argininosuccinate lyase (461 aa).

Belongs to the lyase 1 family. Argininosuccinate lyase subfamily.

It localises to the cytoplasm. The catalysed reaction is 2-(N(omega)-L-arginino)succinate = fumarate + L-arginine. Its pathway is amino-acid biosynthesis; L-arginine biosynthesis; L-arginine from L-ornithine and carbamoyl phosphate: step 3/3. The chain is Argininosuccinate lyase from Trichormus variabilis (strain ATCC 29413 / PCC 7937) (Anabaena variabilis).